The following is a 488-amino-acid chain: Bifunctional protein HldE (488 aa).

Positions M1–L331 are ribokinase. N206 to E209 contributes to the ATP binding site. Residue D276 is part of the active site. The tract at residues F358–N488 is cytidylyltransferase.

It in the N-terminal section; belongs to the carbohydrate kinase PfkB family. This sequence in the C-terminal section; belongs to the cytidylyltransferase family. Homodimer.

The enzyme catalyses D-glycero-beta-D-manno-heptose 7-phosphate + ATP = D-glycero-beta-D-manno-heptose 1,7-bisphosphate + ADP + H(+). It carries out the reaction D-glycero-beta-D-manno-heptose 1-phosphate + ATP + H(+) = ADP-D-glycero-beta-D-manno-heptose + diphosphate. The protein operates within nucleotide-sugar biosynthesis; ADP-L-glycero-beta-D-manno-heptose biosynthesis; ADP-L-glycero-beta-D-manno-heptose from D-glycero-beta-D-manno-heptose 7-phosphate: step 1/4. It functions in the pathway nucleotide-sugar biosynthesis; ADP-L-glycero-beta-D-manno-heptose biosynthesis; ADP-L-glycero-beta-D-manno-heptose from D-glycero-beta-D-manno-heptose 7-phosphate: step 3/4. Its function is as follows. Catalyzes the phosphorylation of D-glycero-D-manno-heptose 7-phosphate at the C-1 position to selectively form D-glycero-beta-D-manno-heptose-1,7-bisphosphate. Functionally, catalyzes the ADP transfer from ATP to D-glycero-beta-D-manno-heptose 1-phosphate, yielding ADP-D-glycero-beta-D-manno-heptose. This Paramagnetospirillum magneticum (strain ATCC 700264 / AMB-1) (Magnetospirillum magneticum) protein is Bifunctional protein HldE.